The sequence spans 294 residues: Release factor glutamine methyltransferase (294 aa).

Residues 131-135 (GTGSG), Asp154, and Asn202 contribute to the S-adenosyl-L-methionine site. Residue 202-205 (NPPY) participates in substrate binding.

Belongs to the protein N5-glutamine methyltransferase family. PrmC subfamily.

The enzyme catalyses L-glutaminyl-[peptide chain release factor] + S-adenosyl-L-methionine = N(5)-methyl-L-glutaminyl-[peptide chain release factor] + S-adenosyl-L-homocysteine + H(+). Its function is as follows. Methylates the class 1 translation termination release factors RF1/PrfA and RF2/PrfB on the glutamine residue of the universally conserved GGQ motif. This Chlorobaculum tepidum (strain ATCC 49652 / DSM 12025 / NBRC 103806 / TLS) (Chlorobium tepidum) protein is Release factor glutamine methyltransferase.